Reading from the N-terminus, the 358-residue chain is Fructose-bisphosphate aldolase 1, cytoplasmic (358 aa).

Substrate is bound at residue arginine 39. Glutamate 183 functions as the Proton acceptor in the catalytic mechanism. Lysine 225 serves as the catalytic Schiff-base intermediate with dihydroxyacetone-P. Substrate-binding positions include 266–268 (SGG) and arginine 298.

Belongs to the class I fructose-bisphosphate aldolase family. In terms of assembly, homotetramer. In terms of tissue distribution, expressed in callus.

It localises to the cytoplasm. The protein localises to the cytosol. It catalyses the reaction beta-D-fructose 1,6-bisphosphate = D-glyceraldehyde 3-phosphate + dihydroxyacetone phosphate. Its pathway is carbohydrate degradation; glycolysis; D-glyceraldehyde 3-phosphate and glycerone phosphate from D-glucose: step 4/4. Fructose-bisphosphate aldolase that plays a key role in glycolysis and gluconeogenesis. Involved in gibberellin-mediated root growth. May be regulated by CDPK13. Associates with vacuolar proton ATPase (V-ATPase) and may regulate the V-ATPase-mediated control of root cell elongation. In Oryza sativa subsp. japonica (Rice), this protein is Fructose-bisphosphate aldolase 1, cytoplasmic.